The chain runs to 103 residues: Large ribosomal subunit protein bL21 (103 aa).

Belongs to the bacterial ribosomal protein bL21 family. Part of the 50S ribosomal subunit. Contacts protein L20.

Its function is as follows. This protein binds to 23S rRNA in the presence of protein L20. This chain is Large ribosomal subunit protein bL21, found in Acidovorax ebreus (strain TPSY) (Diaphorobacter sp. (strain TPSY)).